The chain runs to 505 residues: Deoxyguanosinetriphosphate triphosphohydrolase (505 aa).

One can recognise an HD domain in the interval 66-273 (RLTHSMEVQQ…MEAADDISYC (208 aa)).

The protein belongs to the dGTPase family. Type 1 subfamily. Homotetramer. The cofactor is Mg(2+).

The enzyme catalyses dGTP + H2O = 2'-deoxyguanosine + triphosphate + H(+). Its function is as follows. dGTPase preferentially hydrolyzes dGTP over the other canonical NTPs. This is Deoxyguanosinetriphosphate triphosphohydrolase from Shigella flexneri.